We begin with the raw amino-acid sequence, 369 residues long: Histone deacetylase-like amidohydrolase (369 aa).

The active-site Proton donor/acceptor is the His-143. 3 residues coordinate Zn(2+): Asp-180, His-182, and Asp-268.

Belongs to the histone deacetylase family. In terms of assembly, homotetramer; dimer of dimers. Requires Zn(2+) as cofactor.

Its activity is regulated as follows. Zinc, and cobalt and nickel at a lesser extent, are able to increase the catalytic activity (2.2-, 1.3- and 1.1-fold respectively) at concentrations of 1 mM. Higher concentrations have an inhibitory effect. Magnesium, manganese and calcium have no effect on activity at concentrations between 0 and 10 mM. At 100 mM, the catalytic activity is increased between 1.2- and 2.1-fold. Hydroxamates like TSA and SAHA inhibit the enzyme. Is also inhibited by azobenzenes, stilbenes and arylazopyrazoles. In terms of biological role, exhibits significant levels of protein deacetylase activity comparable to those of eukaryotic HDACs in assays both with fluorogenic peptidic substrates and acetate-radiolabeled histones. Accepts proteins with epsilon-acetylated lysine residues and tritiated-acetate-prelabeled chicken histones as substrates. The natural substrate protein is not yet known. This chain is Histone deacetylase-like amidohydrolase (hdaH), found in Alcaligenes sp. (strain DSM 11172) (Bordetella sp. (strain FB188)).